We begin with the raw amino-acid sequence, 297 residues long: Protein BCCIP homolog (297 aa).

Residues 1–40 form a disordered region; the sequence is MSANKQKKLSTMEVDPNEDVSSSSEDDDDDEPHPDAYKGN.

Belongs to the BCP1 family.

This chain is Protein BCCIP homolog, found in Drosophila melanogaster (Fruit fly).